The sequence spans 381 residues: Probable glucuronosyltransferase Os04g0103100 (381 aa).

Residues 1-69 (MASIRRPHSP…HTSFRRPLPR (69 aa)) are Cytoplasmic-facing. Residues 21-50 (HLGPFASSSPPSSPLRHSSSSSSPRSAAHH) are disordered. Over residues 26 to 46 (ASSSPPSSPLRHSSSSSSPRS) the composition is skewed to low complexity. The chain crosses the membrane as a helical; Signal-anchor for type II membrane protein span at residues 70–90 (FAAFFLLGSFLGLLHFLSHLP). At 91–381 (RPLGPIPNPN…TDLDVIIPLK (291 aa)) the chain is on the lumenal side. The interval 96 to 122 (IPNPNSHHRHRDPFPILQHPHPPSTPH) is disordered. 2 N-linked (GlcNAc...) asparagine glycosylation sites follow: N194 and N296.

The protein belongs to the glycosyltransferase 43 family.

The protein localises to the golgi apparatus membrane. Involved in the synthesis of glucuronoxylan hemicellulose in secondary cell walls. In Oryza sativa subsp. japonica (Rice), this protein is Probable glucuronosyltransferase Os04g0103100.